The primary structure comprises 142 residues: HTH-type transcriptional repressor NsrR (142 aa).

The 128-residue stretch at glutamine 2–glutamate 129 folds into the HTH rrf2-type domain. Residues isoleucine 28–histidine 51 constitute a DNA-binding region (H-T-H motif). Positions 91, 96, and 102 each coordinate [2Fe-2S] cluster.

[2Fe-2S] cluster is required as a cofactor.

Nitric oxide-sensitive repressor of genes involved in protecting the cell against nitrosative stress. May require iron for activity. The sequence is that of HTH-type transcriptional repressor NsrR from Proteus mirabilis (strain HI4320).